The chain runs to 243 residues: NAD-dependent protein deacylase SIR2rp3 (243 aa).

Residues 1 to 239 (MKACRCITIL…PTWVDQVLKE (239 aa)) form the Deacetylase sirtuin-type domain. An NAD(+)-binding site is contributed by 12–31 (GAGISAESGISTFRDSNGLW). Tyr-56 and Arg-59 together coordinate substrate. Position 95 to 98 (95 to 98 (QNVD)) interacts with NAD(+). The Proton acceptor role is filled by His-113. Zn(2+) is bound by residues Cys-121 and Cys-141. NAD(+) contacts are provided by residues 181–183 (GTS) and Ala-225.

It belongs to the sirtuin family. Class III subfamily. The cofactor is Zn(2+).

The protein resides in the mitochondrion. The enzyme catalyses N(6)-malonyl-L-lysyl-[protein] + NAD(+) + H2O = 2''-O-malonyl-ADP-D-ribose + nicotinamide + L-lysyl-[protein]. It catalyses the reaction N(6)-succinyl-L-lysyl-[protein] + NAD(+) + H2O = 2''-O-succinyl-ADP-D-ribose + nicotinamide + L-lysyl-[protein]. It carries out the reaction N(6)-glutaryl-L-lysyl-[protein] + NAD(+) + H2O = 2''-O-glutaryl-ADP-D-ribose + nicotinamide + L-lysyl-[protein]. In terms of biological role, NAD-dependent lysine demalonylase, desuccinylase and deglutarylase that specifically removes malonyl, succinyl and glutaryl groups on target proteins. Has weak NAD-dependent protein deacetylase activity; however this activity may not be physiologically relevant in vivo. The polypeptide is NAD-dependent protein deacylase SIR2rp3 (SIR2rp3) (Leishmania major).